Reading from the N-terminus, the 107-residue chain is Phosphoribosyl-ATP pyrophosphatase (107 aa).

The protein belongs to the PRA-PH family.

Its subcellular location is the cytoplasm. It carries out the reaction 1-(5-phospho-beta-D-ribosyl)-ATP + H2O = 1-(5-phospho-beta-D-ribosyl)-5'-AMP + diphosphate + H(+). It functions in the pathway amino-acid biosynthesis; L-histidine biosynthesis; L-histidine from 5-phospho-alpha-D-ribose 1-diphosphate: step 2/9. The polypeptide is Phosphoribosyl-ATP pyrophosphatase (Rhizobium etli (strain CIAT 652)).